Consider the following 471-residue polypeptide: Sestrin-2 (471 aa).

The residue at position 1 (Met1) is an N-acetylmethionine. The tract at residues 57-230 (GLEALMSSGR…APSPPSEQST (174 aa)) is N-terminal domain; mediates the alkylhydroperoxide reductase activity. The active-site Cysteine sulfenic acid (-SOH) intermediate is Cys116. Lys166 is covalently cross-linked (Glycyl lysine isopeptide (Lys-Gly) (interchain with G-Cter in ubiquitin)). The tract at residues 212–241 (DPEGSPAPQAPSPPSEQSTPPSRDSLNHSG) is disordered. Phosphoserine is present on Ser240. The tract at residues 299 to 471 (ANPDMLCFVE…ALRAITRYMT (173 aa)) is C-terminal domain; mediates TORC1 regulation. L-leucine contacts are provided by residues 365–368 (TYNT), Thr377, and Glu442.

Belongs to the sestrin family. As to quaternary structure, interacts with the GATOR2 complex which is composed of MIOS, SEC13, SEH1L, WDR24 and WDR59; the interaction is negatively regulated by leucine. Conveys leucine availability via direct interaction with SEH1L and WDR24 components of the GATOR2 complex. Interacts with RRAGA, RRAGB, RRAGC and RRAGD; may function as a guanine nucleotide dissociation inhibitor for RRAGs and regulate them. May interact with the TORC2 complex. Interacts with KEAP1, RBX1, SQSTM and ULK1; to regulate the degradation of KEAP1. May also associate with the complex composed of TSC1, TSC2 and the AMP-responsive protein kinase/AMPK to regulate TORC1 signaling. May interact with PRDX1. Phosphorylated by ULK1 at multiple sites. Post-translationally, ubiquitinated at Lys-166 by RNF167 via 'Lys-63'-linked polyubiquitination in response to leucine deprivation: ubiquitination promotes SESN2-interaction with the GATOR2 complex, leading to inhibit the TORC1 signaling pathway. Deubiquitinated at Lys-166 by STAMBPL1, promoting the TORC1 signaling pathway. Ubiquitinated by RNF186; ubiquitination mediates proteasomal degradation.

Its subcellular location is the cytoplasm. The catalysed reaction is a hydroperoxide + L-cysteinyl-[protein] = S-hydroxy-L-cysteinyl-[protein] + an alcohol. In terms of biological role, functions as an intracellular leucine sensor that negatively regulates the mTORC1 signaling pathway through the GATOR complex. In absence of leucine, binds the GATOR subcomplex GATOR2 and prevents mTORC1 signaling. Binding of leucine to SESN2 disrupts its interaction with GATOR2 thereby activating the TORC1 signaling pathway. This stress-inducible metabolic regulator also plays a role in protection against oxidative and genotoxic stresses. May negatively regulate protein translation in response to endoplasmic reticulum stress, via mTORC1. May positively regulate the transcription by NFE2L2 of genes involved in the response to oxidative stress by facilitating the SQSTM1-mediated autophagic degradation of KEAP1. May also mediate TP53 inhibition of TORC1 signaling upon genotoxic stress. Moreover, may prevent the accumulation of reactive oxygen species (ROS) through the alkylhydroperoxide reductase activity born by the N-terminal domain of the protein. Was originally reported to contribute to oxidative stress resistance by reducing PRDX1. However, this could not be confirmed. This chain is Sestrin-2, found in Bos taurus (Bovine).